Here is a 107-residue protein sequence, read N- to C-terminus: Phosphoribosyl-ATP pyrophosphatase (107 aa).

This sequence belongs to the PRA-PH family.

It localises to the cytoplasm. It carries out the reaction 1-(5-phospho-beta-D-ribosyl)-ATP + H2O = 1-(5-phospho-beta-D-ribosyl)-5'-AMP + diphosphate + H(+). It functions in the pathway amino-acid biosynthesis; L-histidine biosynthesis; L-histidine from 5-phospho-alpha-D-ribose 1-diphosphate: step 2/9. The sequence is that of Phosphoribosyl-ATP pyrophosphatase from Bacillus cereus (strain ZK / E33L).